The following is a 345-amino-acid chain: Protein RecA (345 aa).

65–72 (GPESSGKT) lines the ATP pocket. The span at 326–336 (EKFQPAEAARE) shows a compositional bias: basic and acidic residues. The tract at residues 326–345 (EKFQPAEAAREEGDDEGEDE) is disordered.

The protein belongs to the RecA family.

Its subcellular location is the cytoplasm. Can catalyze the hydrolysis of ATP in the presence of single-stranded DNA, the ATP-dependent uptake of single-stranded DNA by duplex DNA, and the ATP-dependent hybridization of homologous single-stranded DNAs. It interacts with LexA causing its activation and leading to its autocatalytic cleavage. This chain is Protein RecA, found in Stenotrophomonas maltophilia (strain K279a).